The primary structure comprises 581 residues: Putative adenine deaminase BH0637 (581 aa).

This sequence belongs to the metallo-dependent hydrolases superfamily. Adenine deaminase family.

It catalyses the reaction adenine + H2O + H(+) = hypoxanthine + NH4(+). The chain is Putative adenine deaminase BH0637 from Halalkalibacterium halodurans (strain ATCC BAA-125 / DSM 18197 / FERM 7344 / JCM 9153 / C-125) (Bacillus halodurans).